The sequence spans 324 residues: Probable pectinesterase A (324 aa).

The N-terminal stretch at 1-19 (MHLPSLVLGLLGLGLTASA) is a signal peptide. N-linked (GlcNAc...) asparagine glycosylation is present at Asn-27. Gln-142 contacts substrate. Residue Asp-165 is the Proton donor of the active site. The active-site Nucleophile is Asp-186. A glycan (N-linked (GlcNAc...) asparagine) is linked at Asn-191. Substrate contacts are provided by Arg-246 and Trp-248.

Belongs to the pectinesterase family.

It localises to the secreted. It catalyses the reaction [(1-&gt;4)-alpha-D-galacturonosyl methyl ester](n) + n H2O = [(1-&gt;4)-alpha-D-galacturonosyl](n) + n methanol + n H(+). The protein operates within glycan metabolism; pectin degradation; 2-dehydro-3-deoxy-D-gluconate from pectin: step 1/5. Its function is as follows. Involved in maceration and soft-rotting of plant tissue. This is Probable pectinesterase A (pmeA) from Neosartorya fischeri (strain ATCC 1020 / DSM 3700 / CBS 544.65 / FGSC A1164 / JCM 1740 / NRRL 181 / WB 181) (Aspergillus fischerianus).